The following is a 286-amino-acid chain: 33 kDa chaperonin (286 aa).

Disulfide bonds link Cys225/Cys227 and Cys258/Cys261.

The protein belongs to the HSP33 family. Under oxidizing conditions two disulfide bonds are formed involving the reactive cysteines. Under reducing conditions zinc is bound to the reactive cysteines and the protein is inactive.

Its subcellular location is the cytoplasm. Its function is as follows. Redox regulated molecular chaperone. Protects both thermally unfolding and oxidatively damaged proteins from irreversible aggregation. Plays an important role in the bacterial defense system toward oxidative stress. The protein is 33 kDa chaperonin of Shewanella loihica (strain ATCC BAA-1088 / PV-4).